The following is a 352-amino-acid chain: Hematopoietic SH2 domain-containing protein (352 aa).

The region spanning 34-125 (WFHGAISRED…PRRELLTQPC (92 aa)) is the SH2 domain. 2 disordered regions span residues 157–199 (EEAS…LGET) and 241–352 (VISG…PGYC). The segment covering 180 to 191 (RITTKEATSSCP) has biased composition (polar residues). A compositionally biased stretch (basic and acidic residues) spans 283 to 295 (PKDRKVPTRKAER). Positions 343 to 352 (QPPPFAPGYC) are enriched in pro residues.

In terms of assembly, interacts with FES and TNK2. Post-translationally, may be phosphorylated by FES and ACK1. In terms of tissue distribution, predominantly expressed in spleen and hematopoietic cells such as peripheral blood leukocytes and weakly expressed in prostate, thymus, heart, small intestine and placenta.

It is found in the cytoplasm. The protein resides in the nucleus. May be a modulator of the apoptotic response through its ability to affect mitochondrial stability. Adapter protein involved in tyrosine kinase and CD28 signaling. Seems to affect CD28-mediated activation of the RE/AP element of the interleukin-2 promoter. The chain is Hematopoietic SH2 domain-containing protein (HSH2D) from Homo sapiens (Human).